Here is a 523-residue protein sequence, read N- to C-terminus: NAD(P)H-quinone oxidoreductase subunit 2 (523 aa).

The next 14 helical transmembrane spans lie at 29–49 (AIAP…VDLA), 57–77 (WVPP…AQQW), 94–114 (LAIS…LISW), 123–143 (PIGE…LLCG), 147–167 (LVSV…LAGY), 182–202 (LLVG…LYGL), 223–243 (AALS…AVPF), 255–275 (PTPV…ALAL), 291–311 (LLFT…ALAQ), 317–337 (MLAY…VCGT), 345–365 (VLYM…IILF), 389–409 (LGLS…GFFG), 424–444 (LLVV…ISVI), and 477–497 (IALV…NPLF).

Belongs to the complex I subunit 2 family. In terms of assembly, NDH-1 can be composed of about 15 different subunits; different subcomplexes with different compositions have been identified which probably have different functions.

It localises to the cellular thylakoid membrane. It carries out the reaction a plastoquinone + NADH + (n+1) H(+)(in) = a plastoquinol + NAD(+) + n H(+)(out). The enzyme catalyses a plastoquinone + NADPH + (n+1) H(+)(in) = a plastoquinol + NADP(+) + n H(+)(out). NDH-1 shuttles electrons from an unknown electron donor, via FMN and iron-sulfur (Fe-S) centers, to quinones in the respiratory and/or the photosynthetic chain. The immediate electron acceptor for the enzyme in this species is believed to be plastoquinone. Couples the redox reaction to proton translocation, and thus conserves the redox energy in a proton gradient. Cyanobacterial NDH-1 also plays a role in inorganic carbon-concentration. This chain is NAD(P)H-quinone oxidoreductase subunit 2, found in Prochlorococcus marinus (strain MIT 9313).